Reading from the N-terminus, the 381-residue chain is N-acetyldiaminopimelate deacetylase (381 aa).

Aspartate 73 is a catalytic residue. Catalysis depends on glutamate 132, which acts as the Proton acceptor.

Belongs to the peptidase M20A family. N-acetyldiaminopimelate deacetylase subfamily.

The enzyme catalyses N-acetyl-(2S,6S)-2,6-diaminopimelate + H2O = (2S,6S)-2,6-diaminopimelate + acetate. The protein operates within amino-acid biosynthesis; L-lysine biosynthesis via DAP pathway; LL-2,6-diaminopimelate from (S)-tetrahydrodipicolinate (acetylase route): step 3/3. Functionally, catalyzes the conversion of N-acetyl-diaminopimelate to diaminopimelate and acetate. The polypeptide is N-acetyldiaminopimelate deacetylase (Limosilactobacillus reuteri (strain DSM 20016) (Lactobacillus reuteri)).